Reading from the N-terminus, the 81-residue chain is Cytochrome b559 subunit alpha (81 aa).

The helical transmembrane segment at 21–35 (VIHSITIPMLFVAGW) threads the bilayer. Residue H23 coordinates heme.

Belongs to the PsbE/PsbF family. Heterodimer of an alpha subunit and a beta subunit. PSII is composed of 1 copy each of membrane proteins PsbA, PsbB, PsbC, PsbD, PsbE, PsbF, PsbH, PsbI, PsbJ, PsbK, PsbL, PsbM, PsbT, PsbX, PsbY, PsbZ, Psb30/Ycf12, peripheral proteins PsbO, CyanoQ (PsbQ), PsbU, PsbV and a large number of cofactors. It forms dimeric complexes. The cofactor is heme b.

It localises to the cellular thylakoid membrane. This b-type cytochrome is tightly associated with the reaction center of photosystem II (PSII). PSII is a light-driven water:plastoquinone oxidoreductase that uses light energy to abstract electrons from H(2)O, generating O(2) and a proton gradient subsequently used for ATP formation. It consists of a core antenna complex that captures photons, and an electron transfer chain that converts photonic excitation into a charge separation. The protein is Cytochrome b559 subunit alpha of Gloeothece citriformis (strain PCC 7424) (Cyanothece sp. (strain PCC 7424)).